Here is a 687-residue protein sequence, read N- to C-terminus: Putative mitochondrial carnitine O-acetyltransferase (687 aa).

Residue His346 is the Proton acceptor of the active site. CoA is bound at residue 446-459 (GASHIKTVFKCSPD). Tyr481 and Thr494 together coordinate (R)-carnitine. Phosphoserine is present on Ser517.

The protein belongs to the carnitine/choline acetyltransferase family.

The protein localises to the mitochondrion inner membrane. The catalysed reaction is (R)-carnitine + acetyl-CoA = O-acetyl-(R)-carnitine + CoA. Its function is as follows. Involved in the transfer of acetyl-CoA into mitochondria. May also be involved in the metabolism of acetate and of ethanol. This Saccharomyces cerevisiae (strain ATCC 204508 / S288c) (Baker's yeast) protein is Putative mitochondrial carnitine O-acetyltransferase (YAT1).